Consider the following 1097-residue polypeptide: Protein toll (1097 aa).

The N-terminal stretch at 1–27 (MSRLKAASELALLVIILQLLQWPGSEA) is a signal peptide. Topologically, residues 28–807 (SFGRDACSEM…ICPAEKGVFI (780 aa)) are extracellular. 3 cysteine pairs are disulfide-bonded: Cys34-Cys45, Cys43-Cys56, and Cys79-Cys107. Residues Asn80, Asn140, and Asn175 are each glycosylated (N-linked (GlcNAc...) asparagine). LRR repeat units follow at residues 175-195 (NLSH…LFDD), 198-219 (NLES…IFGK), 222-243 (KLKQ…DFEG), 246-267 (SVLG…VFAH), 270-291 (NVTD…LFDH), 294-314 (HLNE…PSRL), 320-340 (ELQI…LFEH), 343-364 (QITN…LLEH), 367-388 (NLLS…LFAH), 391-412 (NLTD…IFSN), 415-436 (NLVT…AFVS), 439-460 (GLRH…LDIM), 474-495 (GLLT…WKNT), 498-521 (QLRE…AFLS), and 523-544 (NRLH…EDVH). A glycan (N-linked (GlcNAc...) asparagine) is linked at Asn235. Asn270 and Asn275 each carry an N-linked (GlcNAc...) asparagine glycan. Residue Asn346 is glycosylated (N-linked (GlcNAc...) asparagine). An N-linked (GlcNAc...) asparagine glycan is attached at Asn391. N-linked (GlcNAc...) asparagine glycosylation is found at Asn482, Asn508, and Asn528. Residues 561–620 (NPLVCDCTILWFIQLVRGVHKPQYSRQFKLRTDRLVCSQPNVLEGTPVRQIEPQTLICPL) form the LRRCT 1 domain. Cystine bridges form between Cys565-Cys597, Cys567-Cys618, Cys631-Cys637, and Cys635-Cys650. The LRRNT domain maps to 622 to 663 (FSDDPRERKCPRGCNCHVRTYDKALVINCHSGNLTHVPRLPN). N-linked (GlcNAc...) asparagine glycans are attached at residues Asn654, Asn677, Asn703, Asn715, Asn730, and Asn738. LRR repeat units follow at residues 669 to 690 (QLME…NTPG), 693 to 713 (SVTS…DQLP), and 715 to 738 (NLTH…GFLN). Residues 751–801 (NPWMCDCTAKPLLLFTQDNFERIGDRNEMMCVNAEMPTRMVELSTNDICPA) form the LRRCT 2 domain. Disulfide bonds link Cys755–Cys781 and Cys757–Cys799. Residues 808-828 (ALAVVIALTGLLAGFTAALYY) form a helical membrane-spanning segment. Residues 829 to 1097 (KFQTEIKIWL…INTNAKQSDV (269 aa)) lie on the Cytoplasmic side of the membrane. In terms of domain architecture, TIR spans 857–993 (KKFDAFISYS…WFWDKLRFAL (137 aa)).

This sequence belongs to the Toll-like receptor family. In the absence of ligand, forms a low-affinity disulfide-linked homodimer. In the presence of ligand, crystal structures show one Tl molecule bound to a spaetzle C-106 homodimer. However, the active complex probably consists of two Tl molecules bound to a spaetzle C-106 homodimer. This is supported by in vitro experiments which also show binding of the spaetzle C-106 dimer to 2 Tl receptors. Ligand binding induces conformational changes in the extracellular domain of Tl. This may enable a secondary homodimerization interface at the C-terminus of the Tl extracellular domain. As to expression, in early embryos, concentrated in the pseudocleavage furrows that form transiently between nuclei before cellularization and in the cleavage furrows during cellularization (at protein level). Later, found on cells in the mesectoderm, stomodeum, proctodeum, anterior and posterior midguts, splanchnopleura, salivary gland placode and adjacent to the segmentally repeated tracheal placodes (at protein level). During and after germ band shortening, localized in a number of cell types, including the salivary gland, foregut, hindgut, Malpighian tubules and epidermis (at protein level). In embryos, high expression in M13 with comparatively low expression in M12.

The protein localises to the cell membrane. Its subcellular location is the cytoplasm. Functionally, receptor for the cleaved activated form of spz, spaetzle C-106. Binding to spaetzle C-106 activates the Toll signaling pathway and induces expression of the antifungal peptide drosomycin. Component of the extracellular signaling pathway that establishes dorsal-ventral polarity in the embryo. Promotes heterophilic cellular adhesion. Involved in synaptic targeting of motoneurons RP5 and V to muscle 12 (M12); functions as a repulsive cue inhibiting motoneuron synapse formation on muscle 13 (M13) to guide RP5 and V to the neighboring M12, where its expression is repressed by tey. May also function in embryonic neuronal survival and the synaptic targeting of SNa motoneurons. The sequence is that of Protein toll from Drosophila melanogaster (Fruit fly).